The chain runs to 247 residues: Segregation and condensation protein A (247 aa).

The protein belongs to the ScpA family. Component of a cohesin-like complex composed of ScpA, ScpB and the Smc homodimer, in which ScpA and ScpB bind to the head domain of Smc. The presence of the three proteins is required for the association of the complex with DNA.

The protein localises to the cytoplasm. In terms of biological role, participates in chromosomal partition during cell division. May act via the formation of a condensin-like complex containing Smc and ScpB that pull DNA away from mid-cell into both cell halves. This is Segregation and condensation protein A from Lactobacillus gasseri (strain ATCC 33323 / DSM 20243 / BCRC 14619 / CIP 102991 / JCM 1131 / KCTC 3163 / NCIMB 11718 / NCTC 13722 / AM63).